A 485-amino-acid polypeptide reads, in one-letter code: Inosine-5'-monophosphate dehydrogenase (485 aa).

2 consecutive CBS domains span residues 99–154 and 156–215; these read IVED…LVKE and MTKD…VRDE. Residues Asp247 and 294–296 each bind NAD(+); that span reads GIG. K(+) is bound by residues Gly296 and Gly298. IMP is bound at residue Ser299. Residue Cys301 coordinates K(+). Cys301 serves as the catalytic Thioimidate intermediate. IMP contacts are provided by residues 334–336, 357–358, and 381–385; these read DGG, GN, and YRGMG. Catalysis depends on Arg397, which acts as the Proton acceptor. Glu412 is an IMP binding site. K(+)-binding residues include Glu466, Ser467, and His468.

This sequence belongs to the IMPDH/GMPR family. As to quaternary structure, homotetramer. K(+) serves as cofactor.

It catalyses the reaction IMP + NAD(+) + H2O = XMP + NADH + H(+). It participates in purine metabolism; XMP biosynthesis via de novo pathway; XMP from IMP: step 1/1. Mycophenolic acid (MPA) is a non-competitive inhibitor that prevents formation of the closed enzyme conformation by binding to the same site as the amobile flap. In contrast, mizoribine monophosphate (MZP) is a competitive inhibitor that induces the closed conformation. MPA is a potent inhibitor of mammalian IMPDHs but a poor inhibitor of the bacterial enzymes. MZP is a more potent inhibitor of bacterial IMPDH. Its function is as follows. Catalyzes the conversion of inosine 5'-phosphate (IMP) to xanthosine 5'-phosphate (XMP), the first committed and rate-limiting step in the de novo synthesis of guanine nucleotides, and therefore plays an important role in the regulation of cell growth. The protein is Inosine-5'-monophosphate dehydrogenase of Pyrococcus abyssi (strain GE5 / Orsay).